Reading from the N-terminus, the 372-residue chain is Glutamate 5-kinase (372 aa).

Lys14 provides a ligand contact to ATP. Substrate contacts are provided by Ser54, Asp141, and Asn153. Thr173–Asp174 serves as a coordination point for ATP. The region spanning Arg280–Met358 is the PUA domain.

It belongs to the glutamate 5-kinase family.

It localises to the cytoplasm. It carries out the reaction L-glutamate + ATP = L-glutamyl 5-phosphate + ADP. It functions in the pathway amino-acid biosynthesis; L-proline biosynthesis; L-glutamate 5-semialdehyde from L-glutamate: step 1/2. In terms of biological role, catalyzes the transfer of a phosphate group to glutamate to form L-glutamate 5-phosphate. The sequence is that of Glutamate 5-kinase from Paraburkholderia xenovorans (strain LB400).